Consider the following 136-residue polypeptide: Ubiquinol-cytochrome-c reductase complex assembly factor 2 (136 aa).

The N-terminal 13 residues, 1-13 (MAALRYRRFLKLC), are a transit peptide targeting the mitochondrion.

In terms of assembly, interacts with UQCC1.

The protein localises to the mitochondrion matrix. Its subcellular location is the mitochondrion nucleoid. It is found in the mitochondrion. The protein resides in the mitochondrion intermembrane space. It localises to the mitochondrion inner membrane. Required for the assembly of the ubiquinol-cytochrome c reductase complex (mitochondrial respiratory chain complex III or cytochrome b-c1 complex). Plays a role in the modulation of respiratory chain activities such as oxygen consumption and ATP production and via its modulation of the respiratory chain activity can regulate skeletal muscle differentiation and insulin secretion by pancreatic beta-cells. Involved in cytochrome b translation and/or stability. The protein is Ubiquinol-cytochrome-c reductase complex assembly factor 2 (Uqcc2) of Rattus norvegicus (Rat).